Here is a 739-residue protein sequence, read N- to C-terminus: Probable endo-1,3(4)-beta-glucanase An02g00850 (739 aa).

Positions 1–24 (MPTSTLLWSVGSLALSSMVLPAAA) are cleaved as a signal peptide. The 253-residue stretch at 31-283 (ETWKGEDFLT…WAGGVYSTSG (253 aa)) folds into the GH16 domain. Residues Asn59 and Asn74 are each glycosylated (N-linked (GlcNAc...) asparagine). The active-site Nucleophile is Glu140. Glu145 acts as the Proton donor in catalysis. The N-linked (GlcNAc...) asparagine glycan is linked to Asn396. Composition is skewed to low complexity over residues 431 to 442 (SEATEASNSEGS), 452 to 499 (TGAS…AGAT), and 507 to 522 (GASG…SAAA). The segment at 431–718 (SEATEASNSE…TPSTPVFTGG (288 aa)) is disordered. N-linked (GlcNAc...) asparagine glycosylation is found at Asn459 and Asn482. Positions 523 to 532 (TPSNVSSTGA) are enriched in polar residues. Asn526 and Asn537 each carry an N-linked (GlcNAc...) asparagine glycan. Over residues 539–548 (SEDSSASSEA) the composition is skewed to polar residues. The segment covering 561-587 (GASAEANGNDSASSNAATASNVSGASA) has biased composition (low complexity). Asn569, Asn581, Asn592, and Asn620 each carry an N-linked (GlcNAc...) asparagine glycan. The segment covering 597–641 (ASAGANAGSSAAPSSVSGASAEANGSEGSSSHSSGSQAGAHSYGS) has biased composition (low complexity). The segment covering 654–673 (PSSSSHAFATAPSSTGSSRV) has biased composition (polar residues). The span at 674–713 (PTSAAAANNAAAATQGSSASGSNSGSSGHGSSSATTPSTP) shows a compositional bias: low complexity. A lipid anchor (GPI-anchor amidated glycine) is attached at Gly717. Residues 718–739 (GANKLTLGASSVLSVLAFALLA) constitute a propeptide, removed in mature form.

Belongs to the glycosyl hydrolase 16 family.

Its subcellular location is the cell membrane. The catalysed reaction is Endohydrolysis of (1-&gt;3)- or (1-&gt;4)-linkages in beta-D-glucans when the glucose residue whose reducing group is involved in the linkage to be hydrolyzed is itself substituted at C-3.. Its function is as follows. Mixed-linked glucanase involved in the degradation of complex natural cellulosic substrates. In Aspergillus niger (strain ATCC MYA-4892 / CBS 513.88 / FGSC A1513), this protein is Probable endo-1,3(4)-beta-glucanase An02g00850.